We begin with the raw amino-acid sequence, 105 residues long: uncharacterized protein (105 aa).

A helical transmembrane segment spans residues Phe8 to Ser28. The segment at Asp32–Ser53 is disordered. The chain crosses the membrane as a helical span at residues Val72–Phe92.

To M.jannaschii MJ1570.

The protein localises to the cell membrane. This is an uncharacterized protein from Methanothermobacter thermautotrophicus (strain ATCC 29096 / DSM 1053 / JCM 10044 / NBRC 100330 / Delta H) (Methanobacterium thermoautotrophicum).